Here is a 202-residue protein sequence, read N- to C-terminus: Sterile alpha motif domain-containing protein 10 (202 aa).

The segment at 1–22 is disordered; the sequence is MFTELRSKLSPPRARAGAVRPG. Residues 118-184 enclose the SAM domain; that stretch reads WSQQDVCKWL…LQQVLHLQVR (67 aa).

This is Sterile alpha motif domain-containing protein 10 from Mus musculus (Mouse).